Here is a 477-residue protein sequence, read N- to C-terminus: Aspartyl/glutamyl-tRNA(Asn/Gln) amidotransferase subunit B (477 aa).

The protein belongs to the GatB/GatE family. GatB subfamily. Heterotrimer of A, B and C subunits.

It catalyses the reaction L-glutamyl-tRNA(Gln) + L-glutamine + ATP + H2O = L-glutaminyl-tRNA(Gln) + L-glutamate + ADP + phosphate + H(+). The catalysed reaction is L-aspartyl-tRNA(Asn) + L-glutamine + ATP + H2O = L-asparaginyl-tRNA(Asn) + L-glutamate + ADP + phosphate + 2 H(+). Allows the formation of correctly charged Asn-tRNA(Asn) or Gln-tRNA(Gln) through the transamidation of misacylated Asp-tRNA(Asn) or Glu-tRNA(Gln) in organisms which lack either or both of asparaginyl-tRNA or glutaminyl-tRNA synthetases. The reaction takes place in the presence of glutamine and ATP through an activated phospho-Asp-tRNA(Asn) or phospho-Glu-tRNA(Gln). The polypeptide is Aspartyl/glutamyl-tRNA(Asn/Gln) amidotransferase subunit B (Lactococcus lactis subsp. cremoris (strain SK11)).